The sequence spans 124 residues: MPTISQLIRKGREEAVKKSAAPALKECPQKRGVCTRVYTTTPKKPNSALRKVARVRLTNGIEVTSYIPGIGHNLQEHSVVLVRGGRVKDLPGVRYHIVRGALDSAGVQNRNRGRSKYGTKRPKK.

At aspartate 89 the chain carries 3-methylthioaspartic acid. The segment at 104–124 (SAGVQNRNRGRSKYGTKRPKK) is disordered. Positions 111–124 (NRGRSKYGTKRPKK) are enriched in basic residues.

The protein belongs to the universal ribosomal protein uS12 family. As to quaternary structure, part of the 30S ribosomal subunit. Contacts proteins S8 and S17. May interact with IF1 in the 30S initiation complex.

Its function is as follows. With S4 and S5 plays an important role in translational accuracy. Functionally, interacts with and stabilizes bases of the 16S rRNA that are involved in tRNA selection in the A site and with the mRNA backbone. Located at the interface of the 30S and 50S subunits, it traverses the body of the 30S subunit contacting proteins on the other side and probably holding the rRNA structure together. The combined cluster of proteins S8, S12 and S17 appears to hold together the shoulder and platform of the 30S subunit. This is Small ribosomal subunit protein uS12 from Pelotomaculum thermopropionicum (strain DSM 13744 / JCM 10971 / SI).